The sequence spans 279 residues: Tryptophan synthase alpha chain (279 aa).

Active-site proton acceptor residues include Glu50 and Asp61.

This sequence belongs to the TrpA family. As to quaternary structure, tetramer of two alpha and two beta chains.

The catalysed reaction is (1S,2R)-1-C-(indol-3-yl)glycerol 3-phosphate + L-serine = D-glyceraldehyde 3-phosphate + L-tryptophan + H2O. Its pathway is amino-acid biosynthesis; L-tryptophan biosynthesis; L-tryptophan from chorismate: step 5/5. Functionally, the alpha subunit is responsible for the aldol cleavage of indoleglycerol phosphate to indole and glyceraldehyde 3-phosphate. This is Tryptophan synthase alpha chain from Brucella suis biovar 1 (strain 1330).